The primary structure comprises 198 residues: Recombination protein RecR (198 aa).

The segment at 57 to 72 (CSVCGHITENDPCYIC) adopts a C4-type zinc-finger fold. The Toprim domain maps to 80–175 (SVICVVEDDK…KVTRLAQGLS (96 aa)).

It belongs to the RecR family.

In terms of biological role, may play a role in DNA repair. It seems to be involved in an RecBC-independent recombinational process of DNA repair. It may act with RecF and RecO. In Staphylococcus aureus (strain MSSA476), this protein is Recombination protein RecR.